Here is an 851-residue protein sequence, read N- to C-terminus: Glycogen phosphorylase, liver form (851 aa).

Ala2 is modified (N-acetylalanine). At Ser15 the chain carries Phosphoserine; by PHK; in form phosphorylase a. AMP contacts are provided by residues 43–45 (DRN), Tyr76, and Arg310. Lys364 bears the N6-succinyllysine mark. An N6-acetyllysine modification is found at Lys470. Ser524, Ser561, and Ser639 each carry phosphoserine. Lys681 is subject to N6-(pyridoxal phosphate)lysine. Residue Lys796 is modified to N6-acetyllysine.

It belongs to the glycogen phosphorylase family. As to quaternary structure, homodimer; enzymatically active. Interacts with PPP1R3B; recruits the phosphatase PP1 which dephosphorylates and inactivates PYGL/glycogen phosphorylase. Pyridoxal 5'-phosphate serves as cofactor. Post-translationally, acetylation, which is up-regulated by glucose and insulin and down-regulated by glucagon, inhibits the glycogen phosphorylase activity by promoting PPP1R3B-mediated recruitment of phosphatase PP1 and Ser-15 dephosphorylation. In terms of processing, phosphorylation at Ser-15 converts inactive phosphorylase b into active phosphorylase a. Dephosphorylation of Ser-15 by phosphatase PP1 inactivates the enzyme.

It is found in the cytoplasm. It localises to the cytosol. It catalyses the reaction [(1-&gt;4)-alpha-D-glucosyl](n) + phosphate = [(1-&gt;4)-alpha-D-glucosyl](n-1) + alpha-D-glucose 1-phosphate. With respect to regulation, allosterically regulated through the non-covalent binding of metabolites, being activated by AMP and inhibited by ATP, ADP, and glucose-6-phosphate. The activity is also controlled by post-translational modifications including phosphorylation and acetylation. Its function is as follows. Allosteric enzyme that catalyzes the rate-limiting step in glycogen catabolism, the phosphorolytic cleavage of glycogen to produce glucose-1-phosphate, and plays a central role in maintaining cellular and organismal glucose homeostasis. The polypeptide is Glycogen phosphorylase, liver form (Bos taurus (Bovine)).